We begin with the raw amino-acid sequence, 311 residues long: L-lactate dehydrogenase 2 (311 aa).

Residues valine 14, aspartate 35, and arginine 40 each contribute to the NAD(+) site. Arginine 90 serves as a coordination point for substrate. Residues serine 103, 120–122 (ATN), and threonine 145 each bind NAD(+). 122–125 (NPCD) contacts substrate. 150-153 (DTTR) is a substrate binding site. Catalysis depends on histidine 177, which acts as the Proton acceptor. Substrate is bound at residue threonine 230.

Belongs to the LDH/MDH superfamily. LDH family. Homotetramer.

It localises to the cytoplasm. The catalysed reaction is (S)-lactate + NAD(+) = pyruvate + NADH + H(+). The protein operates within fermentation; pyruvate fermentation to lactate; (S)-lactate from pyruvate: step 1/1. In terms of biological role, catalyzes the conversion of lactate to pyruvate. In Listeria innocua serovar 6a (strain ATCC BAA-680 / CLIP 11262), this protein is L-lactate dehydrogenase 2.